The sequence spans 82 residues: Sec-independent protein translocase protein TatA (82 aa).

A helical membrane pass occupies residues 1 to 21 (MGGISIWQLLIIAVIIVLLFG). The interval 48–82 (PAKEAKKDADFVPQNLEKKEAETVEKQKQNDKEQA) is disordered.

It belongs to the TatA/E family. As to quaternary structure, the Tat system comprises two distinct complexes: a TatABC complex, containing multiple copies of TatA, TatB and TatC subunits, and a separate TatA complex, containing only TatA subunits. Substrates initially bind to the TatABC complex, which probably triggers association of the separate TatA complex to form the active translocon.

Its subcellular location is the cell inner membrane. Part of the twin-arginine translocation (Tat) system that transports large folded proteins containing a characteristic twin-arginine motif in their signal peptide across membranes. TatA could form the protein-conducting channel of the Tat system. In Aliivibrio fischeri (strain ATCC 700601 / ES114) (Vibrio fischeri), this protein is Sec-independent protein translocase protein TatA.